The following is a 340-amino-acid chain: Entry-fusion complex protein OPG094 (340 aa).

Residues 1–20 are disordered; the sequence is MGGGVSVELPKRDPPPGVPT. Gly2 carries the N-myristoyl glycine; by host lipid modification. Residues 2 to 319 lie on the Virion surface side of the membrane; it reads GGGVSVELPK…VQHNIKHSFD (318 aa). Residues 320–340 form a helical; Signal-anchor for type II membrane protein membrane-spanning segment; that stretch reads LKLHLISLLSLLVIWILIVAI.

The protein belongs to the orthopoxvirus OPG086 family. In terms of assembly, interacts with OPG143. Component of the entry fusion complex (EFC) composed of OPG053, OPG076, OPG086, OPG094, OPG095, OPG099, OPG107, OPG143, OPG104, OPG147 and OPG155. Except for OPG095 and OPG053, each of the EFC proteins is required for assembly or stability of the complex. Post-translationally, unglycosylated because produced in viral factories instead of the classic ER -Golgi route.

The protein resides in the virion membrane. In terms of biological role, component of the entry fusion complex (EFC), which consists of 11 proteins. During cell infection, this complex mediates entry of the virion core into the host cytoplasm by a two-step mechanism consisting of lipid mixing of the viral and cellular membranes and subsequent pore formation. This Vaccinia virus (strain Copenhagen) (VACV) protein is Entry-fusion complex protein OPG094 (OPG094).